A 47-amino-acid chain; its full sequence is Large ribosomal subunit protein bL33 (47 aa).

It belongs to the bacterial ribosomal protein bL33 family.

This chain is Large ribosomal subunit protein bL33, found in Staphylococcus xylosus.